The chain runs to 93 residues: Stromal cell-derived factor 1 (93 aa).

The first 21 residues, 1-21, serve as a signal peptide directing secretion; sequence MDIRTLALFSILLGSLCLSEG. Positions 22–23 match the Receptor activation motif motif; that stretch reads KP. Positions 29 to 33 are receptor and heparin binding; the sequence is RCPCR. Disulfide bonds link cysteine 30/cysteine 55 and cysteine 32/cysteine 71. Heparin contacts are provided by residues 41 to 51, arginine 62, glutamine 69, and lysine 85; that span reads KSNIKHLKILS. 2 receptor binding regions span residues 48–50 and 60–64; these read KIL and VARLK.

This sequence belongs to the intercrine alpha (chemokine CxC) family. Monomer or homodimer; in equilibrium. Dimer formation is induced by non acidic pH and the presence of multivalent anions, and by binding to cxcr4 or heparin.

It is found in the secreted. Chemoattractant. Activates the C-X-C chemokine receptor cxcr4 to induce a rapid and transient rise in the level of intracellular calcium ions, and chemotaxis. Signaling with cxcr4 mediates the directional movement of mesodermal cells during gastrulation. Binds to the allosteric site (site 2) of integrins and activates them in a cxcr4-independent manner. This is Stromal cell-derived factor 1 from Xenopus tropicalis (Western clawed frog).